The following is a 1132-amino-acid chain: Fas-binding factor 1 homolog (1132 aa).

3 disordered regions span residues 18 to 50, 65 to 84, and 89 to 570; these read DDLL…LQAS, AEDM…PQAV, and KEMD…QSYE. The segment covering 35–46 has biased composition (low complexity); the sequence is AGVSSGRARGSS. Composition is skewed to basic and acidic residues over residues 134-148 and 189-206; these read APEK…DKKP and GSER…EKDP. Positions 226–235 are enriched in acidic residues; the sequence is TFEDDDDDMM. 2 stretches are compositionally biased toward basic and acidic residues: residues 244-270 and 278-303; these read QKGD…DELL and ILER…PEKE. Composition is skewed to polar residues over residues 331 to 341 and 388 to 410; these read RQSVSRFSAEN and AKTS…SKPN. Composition is skewed to low complexity over residues 458-480 and 511-520; these read ATST…ADSS and PSDPAASSPA. Residues 534–548 are compositionally biased toward polar residues; that stretch reads TMPSTPLQAASQLQA. Coiled-coil stretches lie at residues 576–727, 769–882, and 918–1044; these read RAAL…TSAT, ARQR…LAVE, and LAKE…HKKL.

It localises to the cytoplasm. Its subcellular location is the cytoskeleton. It is found in the microtubule organizing center. The protein resides in the centrosome. The protein localises to the centriole. It localises to the spindle pole. Its subcellular location is the cell junction. In terms of biological role, keratin-binding protein required for epithelial cell polarization. Required for ciliogenesis. This is Fas-binding factor 1 homolog (FBF1) from Gallus gallus (Chicken).